The sequence spans 109 residues: Large ribosomal subunit protein uL22 (109 aa).

This sequence belongs to the universal ribosomal protein uL22 family. Part of the 50S ribosomal subunit.

In terms of biological role, this protein binds specifically to 23S rRNA; its binding is stimulated by other ribosomal proteins, e.g. L4, L17, and L20. It is important during the early stages of 50S assembly. It makes multiple contacts with different domains of the 23S rRNA in the assembled 50S subunit and ribosome. The globular domain of the protein is located near the polypeptide exit tunnel on the outside of the subunit, while an extended beta-hairpin is found that lines the wall of the exit tunnel in the center of the 70S ribosome. The protein is Large ribosomal subunit protein uL22 of Bordetella petrii (strain ATCC BAA-461 / DSM 12804 / CCUG 43448).